The sequence spans 589 residues: Aspartate--tRNA ligase (589 aa).

Residue Glu-174 coordinates L-aspartate. The segment at 198 to 201 (QLFK) is aspartate. An L-aspartate-binding site is contributed by Arg-220. ATP-binding positions include 220 to 222 (RDE) and Gln-229. His-448 is a binding site for L-aspartate. Glu-483 provides a ligand contact to ATP. Arg-490 contacts L-aspartate. Residue 535-538 (GIDR) participates in ATP binding.

It belongs to the class-II aminoacyl-tRNA synthetase family. Type 1 subfamily. In terms of assembly, homodimer.

The protein resides in the cytoplasm. The enzyme catalyses tRNA(Asp) + L-aspartate + ATP = L-aspartyl-tRNA(Asp) + AMP + diphosphate. Functionally, catalyzes the attachment of L-aspartate to tRNA(Asp) in a two-step reaction: L-aspartate is first activated by ATP to form Asp-AMP and then transferred to the acceptor end of tRNA(Asp). This is Aspartate--tRNA ligase from Xylella fastidiosa (strain M12).